Here is a 79-residue protein sequence, read N- to C-terminus: Small ribosomal subunit protein uS17 (79 aa).

This sequence belongs to the universal ribosomal protein uS17 family. Part of the 30S ribosomal subunit.

One of the primary rRNA binding proteins, it binds specifically to the 5'-end of 16S ribosomal RNA. In Orientia tsutsugamushi (strain Ikeda) (Rickettsia tsutsugamushi), this protein is Small ribosomal subunit protein uS17.